The following is a 499-amino-acid chain: MSLLREAERCLVNRKAFASLNAFVTPLDRVGSWIERVKDADARRKRGAPKSSLDGKLIAIKDNICTRDVRTTCASAILENFTSPFNATVVELLEESGAIVAGKTNLDEFGMGSHSTYSHFGPVKGVRADDLGYVSAGGSSGGSAIAVATEQCYAALGTDTGGSVRLPAAYTGTVGFKPSYGLLSRWGVVAYANSLDTVGIIGANTSTVSEVFGVLNRYDHRDPTSISKATRSRIDEITGSTSKTRSERLRIGVPIEYNILELDPFVRETWRKSIQHLKNQGHTVHPVSLPATKQALSAYYVLAPAEASSNLAKYDGVRYGTRDLDSPDNTGGYLYARSRGSGFGPEVKRRIVLGAFSLSAEAIDNYFIQAQKVRRLVQSDFNKVFRLHNPLLQATLTSHPKALESDGDTAEKVDVLVCPTAPSPPPLLCSLENAAPTEAYTNDVFTVPASLAGLPALSVPVTPGDREQESPLGIQVIGQFGDDQLVLDVGSRLEKMNIQ.

Active-site charge relay system residues include Lys-61 and Ser-139. The active-site Acyl-ester intermediate is the Ser-163.

Belongs to the amidase family. GatA subfamily. Subunit of the heterotrimeric GatCAB amidotransferase (AdT) complex, composed of A, B and C subunits.

It is found in the mitochondrion. It carries out the reaction L-glutamyl-tRNA(Gln) + L-glutamine + ATP + H2O = L-glutaminyl-tRNA(Gln) + L-glutamate + ADP + phosphate + H(+). Functionally, allows the formation of correctly charged Gln-tRNA(Gln) through the transamidation of misacylated Glu-tRNA(Gln) in the mitochondria. The reaction takes place in the presence of glutamine and ATP through an activated gamma-phospho-Glu-tRNA(Gln). This is Glutamyl-tRNA(Gln) amidotransferase subunit A, mitochondrial from Coccidioides posadasii (strain C735) (Valley fever fungus).